The sequence spans 185 residues: Ribosome-recycling factor (185 aa).

The protein belongs to the RRF family.

It localises to the cytoplasm. Responsible for the release of ribosomes from messenger RNA at the termination of protein biosynthesis. May increase the efficiency of translation by recycling ribosomes from one round of translation to another. The chain is Ribosome-recycling factor from Streptococcus pneumoniae serotype 19F (strain G54).